We begin with the raw amino-acid sequence, 134 residues long: Prefoldin subunit alpha (134 aa).

The protein belongs to the prefoldin subunit alpha family. In terms of assembly, heterohexamer of two alpha and four beta subunits.

The protein resides in the cytoplasm. Its function is as follows. Molecular chaperone capable of stabilizing a range of proteins. Seems to fulfill an ATP-independent, HSP70-like function in archaeal de novo protein folding. The protein is Prefoldin subunit alpha of Pyrobaculum calidifontis (strain DSM 21063 / JCM 11548 / VA1).